The sequence spans 203 residues: LexA repressor (203 aa).

Positions 28–48 form a DNA-binding region, H-T-H motif; it reads VRELCDELGFKSPNTAHFHLK. Active-site for autocatalytic cleavage activity residues include Ser-122 and Lys-159.

This sequence belongs to the peptidase S24 family. Homodimer.

It carries out the reaction Hydrolysis of Ala-|-Gly bond in repressor LexA.. Functionally, represses a number of genes involved in the response to DNA damage (SOS response), including recA and lexA. In the presence of single-stranded DNA, RecA interacts with LexA causing an autocatalytic cleavage which disrupts the DNA-binding part of LexA, leading to derepression of the SOS regulon and eventually DNA repair. The chain is LexA repressor from Desulfatibacillum aliphaticivorans.